A 162-amino-acid chain; its full sequence is Nascent polypeptide-associated complex subunit beta (162 aa).

Disordered stretches follow at residues 1–39 and 130–162; these read MPVD…NISE and EQAK…DNVE. A compositionally biased stretch (basic residues) spans 24–33; sequence TPRRPGKKVA. Positions 38–103 constitute an NAC-A/B domain; sequence SEDEKKLSAT…SQQKDIAELI (66 aa). The span at 146–162 shows a compositional bias: acidic residues; it reads GDDEIPNLVENFEDNVE.

This sequence belongs to the NAC-beta family. As to quaternary structure, part of the nascent polypeptide-associated complex (NAC), consisting of EGD2 and EGD1. NAC associates with ribosomes via EGD1.

The protein localises to the cytoplasm. Its subcellular location is the nucleus. Component of the nascent polypeptide-associated complex (NAC), a dynamic component of the ribosomal exit tunnel, protecting the emerging polypeptides from interaction with other cytoplasmic proteins to ensure appropriate nascent protein targeting. The NAC complex also promotes mitochondrial protein import by enhancing productive ribosome interactions with the outer mitochondrial membrane and blocks the inappropriate interaction of ribosomes translating non-secretory nascent polypeptides with translocation sites in the membrane of the endoplasmic reticulum. EGD1 may act as a transcription factor that exert a negative effect on the expression of several genes that are transcribed by RNA polymerase II. This chain is Nascent polypeptide-associated complex subunit beta (EGD1), found in Yarrowia lipolytica (strain CLIB 122 / E 150) (Yeast).